We begin with the raw amino-acid sequence, 382 residues long: Succinyl-diaminopimelate desuccinylase (382 aa).

Histidine 71 lines the Zn(2+) pocket. Residue aspartate 73 is part of the active site. Aspartate 105 is a Zn(2+) binding site. Glutamate 139 acts as the Proton acceptor in catalysis. 3 residues coordinate Zn(2+): glutamate 140, glutamate 168, and histidine 354.

This sequence belongs to the peptidase M20A family. DapE subfamily. In terms of assembly, homodimer. It depends on Zn(2+) as a cofactor. Co(2+) is required as a cofactor.

The enzyme catalyses N-succinyl-(2S,6S)-2,6-diaminopimelate + H2O = (2S,6S)-2,6-diaminopimelate + succinate. Its pathway is amino-acid biosynthesis; L-lysine biosynthesis via DAP pathway; LL-2,6-diaminopimelate from (S)-tetrahydrodipicolinate (succinylase route): step 3/3. Catalyzes the hydrolysis of N-succinyl-L,L-diaminopimelic acid (SDAP), forming succinate and LL-2,6-diaminopimelate (DAP), an intermediate involved in the bacterial biosynthesis of lysine and meso-diaminopimelic acid, an essential component of bacterial cell walls. In Stutzerimonas stutzeri (strain A1501) (Pseudomonas stutzeri), this protein is Succinyl-diaminopimelate desuccinylase.